The sequence spans 294 residues: N-acetylmuramic acid 6-phosphate etherase (294 aa).

The SIS domain occupies 54 to 217 (VIKSFEEEGR…STASMIGVGK (164 aa)). The active-site Proton donor is the Glu-82. Glu-113 is an active-site residue.

It belongs to the GCKR-like family. MurNAc-6-P etherase subfamily. Homodimer.

The catalysed reaction is N-acetyl-D-muramate 6-phosphate + H2O = N-acetyl-D-glucosamine 6-phosphate + (R)-lactate. It participates in amino-sugar metabolism; N-acetylmuramate degradation. Its function is as follows. Specifically catalyzes the cleavage of the D-lactyl ether substituent of MurNAc 6-phosphate, producing GlcNAc 6-phosphate and D-lactate. In Bacillus cereus (strain AH187), this protein is N-acetylmuramic acid 6-phosphate etherase.